A 206-amino-acid chain; its full sequence is Transcription factor MYB57 (206 aa).

Basic residues predominate over residues 1–11; sequence METTMKKKGRV. A disordered region spans residues 1–20; the sequence is METTMKKKGRVKATITSQKE. HTH myb-type domains follow at residues 22 to 74 and 75 to 129; these read EGTV…LNYL and RPDV…QRHM. 2 consecutive DNA-binding regions (H-T-H motif) follow at residues 50–74 and 102–125; these read WNSV…LNYL and WSKI…RTKI. Residues 138–162 are disordered; that stretch reads NHQHHCSGNSQSSGMTTQGSSGKAI. The span at 144-159 shows a compositional bias: low complexity; sequence SGNSQSSGMTTQGSSG.

Expressed specifically in flowers.

The protein resides in the nucleus. Its function is as follows. Transcription factor acting redundantly with MYB21 and MYB24 to control stamen filament elongation in the late developed flowers. Repressed at the transcript levels by DELLA proteins. This is Transcription factor MYB57 (MYB57) from Arabidopsis thaliana (Mouse-ear cress).